A 1062-amino-acid chain; its full sequence is SLIT-ROBO Rho GTPase-activating protein 1 (1062 aa).

Positions 19–314 constitute an F-BAR domain; that stretch reads SQVKEIRAQL…AVDNLEPRSD (296 aa). The stretch at 352 to 382 forms a coiled coil; it reads QAELMLRNQQLQSRLATLKIESEEVKKTTEA. Serine 416 is modified (phosphoserine). The region spanning 481-671 is the Rho-GAP domain; sequence GRRNSHARHQ…TIIIHHETIF (191 aa). The SH3 domain occupies 720–779; sequence CEPIEAIAKFDYVGRSARELSFKKGASLLLYHRASEDWWEGRHNGIDGLVPHQYIVVQDM. Residues 785–799 show a composition bias toward polar residues; it reads DTLSQKADSEASSGP. Positions 785–931 are disordered; the sequence is DTLSQKADSE…TGFNDHKPLD (147 aa). 2 positions are modified to phosphoserine: serine 812 and serine 894. The segment covering 899–908 has biased composition (basic and acidic residues); sequence SRHDSLKKID. Position 909 is a phosphoserine (serine 909). The span at 914 to 923 shows a compositional bias: polar residues; the sequence is RSTSSGQYTG. Residues 933–960 adopt a coiled-coil conformation; sequence ETIAQDIEETMNTALNELRELERQSTVK. Over residues 974 to 988 the composition is skewed to polar residues; sequence KNSPTPATSTESLSP. 2 disordered regions span residues 974–1013 and 1028–1062; these read KNSPTPATSTESLSPLHNVALRGSEPQIRRSTSSSSETMS and KPPALRPKPAVLPKTNPTMGPAAPSQGPTDKSCTM. Phosphoserine is present on serine 976. At threonine 978 the chain carries Phosphothreonine. Residues 1004–1013 show a composition bias toward low complexity; the sequence is STSSSSETMS. Position 1009 is a phosphoserine (serine 1009). The span at 1053 to 1062 shows a compositional bias: polar residues; that stretch reads QGPTDKSCTM.

In terms of assembly, homodimer. Forms a heterooligomer with SRGAP2 and SRGAP3 through its F-BAR domain. Interacts with CDC42 and RHOA. Interacts with FASLG. Interacts (via SH3 domain) with ROBO1.

Its function is as follows. GTPase-activating protein for RhoA and Cdc42 small GTPases. Together with CDC42 seems to be involved in the pathway mediating the repulsive signaling of Robo and Slit proteins in neuronal migration. SLIT2, probably through interaction with ROBO1, increases the interaction of SRGAP1 with ROBO1 and inactivates CDC42. The polypeptide is SLIT-ROBO Rho GTPase-activating protein 1 (Srgap1) (Mus musculus (Mouse)).